The primary structure comprises 2694 residues: Neurobeachin-like protein 1 (2694 aa).

Disordered regions lie at residues 1289–1314, 1330–1350, and 1381–1411; these read VLMK…TDEE, SLED…DSSV, and CEMS…SVHS. Basic and acidic residues predominate over residues 1290–1314; it reads LMKDNDKNMSTEDTKKNSDEKTDEE. Residues 1383 to 1409 are compositionally biased toward polar residues; the sequence is MSDSGSQVPDSLPSTPSPVESTKSFSV. Positions 1883–1980 constitute a BEACH-type PH domain; it reads DQKEKLVLME…VRNKIYSRLL (98 aa). Residues 1992 to 2284 form the BEACH domain; it reads RSPQELFKAS…QLLKEPHPPR (293 aa). WD repeat units lie at residues 2439 to 2478 and 2490 to 2531; these read RHMD…GVPV and GHTN…RTLR.

It belongs to the WD repeat neurobeachin family. As to expression, highly expressed in brain, kidney, prostate and testis. Weakly expressed in ovary, small intestine, colon and peripheral blood leukocytes. May be correlative to several tumors, such as ovary serous adenocarcinoma and metastasis mammary gland carcinoma breast.

This is Neurobeachin-like protein 1 (NBEAL1) from Homo sapiens (Human).